The following is a 167-amino-acid chain: Endoribonuclease YbeY (167 aa).

The Zn(2+) site is built by His-131, His-135, and His-141.

The protein belongs to the endoribonuclease YbeY family. Requires Zn(2+) as cofactor.

It is found in the cytoplasm. In terms of biological role, single strand-specific metallo-endoribonuclease involved in late-stage 70S ribosome quality control and in maturation of the 3' terminus of the 16S rRNA. The chain is Endoribonuclease YbeY from Rickettsia felis (strain ATCC VR-1525 / URRWXCal2) (Rickettsia azadi).